The following is a 299-amino-acid chain: Very long chain fatty acid elongase 5 (299 aa).

An N-acetylmethionine modification is found at Met-1. The next 7 membrane-spanning stretches (helical) occupy residues 26–46 (WFLLDNYIPTFVCSVIYLLIV), 64–84 (ILQLYNLGLTLLSLYMFYELV), 112–132 (VLWWYYFSKLIEFMDTFFFIL), 139–158 (ITVLHVYHHATMLNIWWFVM), 168–187 (FGATLNSFIHVLMYSYYGLS), 205–225 (GQLVQFVLTIIQTTCGVFWPC), and 227–247 (FPLGWLFFQIGYMISLIALFT). The segment at 274-299 (VAAVNGHTNSFPSLENSVKPRKQRKD) is disordered. Over residues 279–289 (GHTNSFPSLEN) the composition is skewed to polar residues.

This sequence belongs to the ELO family. ELOVL5 subfamily. Interacts with TECR.

The protein resides in the endoplasmic reticulum membrane. It localises to the cell projection. It is found in the dendrite. The enzyme catalyses a very-long-chain acyl-CoA + malonyl-CoA + H(+) = a very-long-chain 3-oxoacyl-CoA + CO2 + CoA. It catalyses the reaction (6Z,9Z,12Z)-octadecatrienoyl-CoA + malonyl-CoA + H(+) = (8Z,11Z,14Z)-3-oxoeicosatrienoyl-CoA + CO2 + CoA. The catalysed reaction is (9Z,12Z,15Z)-octadecatrienoyl-CoA + malonyl-CoA + H(+) = (11Z,14Z,17Z)-3-oxoeicosatrienoyl-CoA + CO2 + CoA. It carries out the reaction (9Z)-hexadecenoyl-CoA + malonyl-CoA + H(+) = 3-oxo-(11Z)-octadecenoyl-CoA + CO2 + CoA. The enzyme catalyses (9Z)-octadecenoyl-CoA + malonyl-CoA + H(+) = 3-oxo-(11Z)-eicosenoyl-CoA + CO2 + CoA. It catalyses the reaction (11Z)-octadecenoyl-CoA + malonyl-CoA + H(+) = 3-oxo-(13Z)-eicosenoyl-CoA + CO2 + CoA. The catalysed reaction is (9Z,12Z)-octadecadienoyl-CoA + malonyl-CoA + H(+) = (11Z,14Z)-3-oxoicosa-11,14-dienoyl-CoA + CO2 + CoA. It carries out the reaction (6Z,9Z,12Z,15Z)-octadecatetraenoyl-CoA + malonyl-CoA + H(+) = (8Z,11Z,14Z,17Z)-3-oxoicosatetraenoyl-CoA + CO2 + CoA. The enzyme catalyses (5Z,8Z,11Z,14Z)-eicosatetraenoyl-CoA + malonyl-CoA + H(+) = (7Z,10Z,13Z,16Z)-3-oxodocosatetraenoyl-CoA + CO2 + CoA. It catalyses the reaction (5Z,8Z,11Z,14Z,17Z)-eicosapentaenoyl-CoA + malonyl-CoA + H(+) = 3-oxo-(7Z,10Z,13Z,16Z,19Z)-docosapentaenoyl-CoA + CO2 + CoA. The protein operates within lipid metabolism; polyunsaturated fatty acid biosynthesis. Its function is as follows. Catalyzes the first and rate-limiting reaction of the four reactions that constitute the long-chain fatty acids elongation cycle. This endoplasmic reticulum-bound enzymatic process allows the addition of 2 carbons to the chain of long- and very long-chain fatty acids (VLCFAs) per cycle. Condensing enzyme that acts specifically toward polyunsaturated acyl-CoA with the higher activity toward C18:3(n-6) acyl-CoA. May participate in the production of monounsaturated and of polyunsaturated VLCFAs of different chain lengths that are involved in multiple biological processes as precursors of membrane lipids and lipid mediators. In conditions where the essential linoleic and alpha linoleic fatty acids are lacking it is also involved in the synthesis of Mead acid from oleic acid. In Mus musculus (Mouse), this protein is Very long chain fatty acid elongase 5.